Reading from the N-terminus, the 587-residue chain is Proline-rich protein 14 (587 aa).

Met1 carries the N-acetylmethionine modification. The span at 1–11 (MDLPGDSSTPG) shows a compositional bias: polar residues. Disordered regions lie at residues 1–48 (MDLP…EKAS), 65–152 (VPLE…HQPT), and 181–241 (ARRA…RPRL). The sufficient for heterochromatin association in interphase and chromatin association in anaphase stretch occupies residues 1-135 (MDLPGDSSTP…TPRRQSRTTP (135 aa)). The required for the interaction with GRB2 and sufficient to promote the phosphorylation of AKT and cell proliferation stretch occupies residues 85–378 (SVRSQPPASP…MAKAPPPPRP (294 aa)). A required for nuclear lamina association region spans residues 136–365 (GPDEGPSQKV…RPRPRRHTVG (230 aa)). Over residues 200–214 (LPAPSRPSALSANPL) the composition is skewed to low complexity. Pro residues predominate over residues 215–234 (ASPPPAPDPVLEPPSTPPPS). Ser277 is subject to Phosphoserine. 2 disordered regions span residues 290-444 (EAGQ…IGKV) and 524-587 (FRDS…PHRT). A compositionally biased stretch (polar residues) spans 314–325 (AQDQNPSATLTK). The segment covering 337-356 (LGPPGPDPCSWPPVPAPSSR) has biased composition (pro residues). The segment covering 398–410 (TSCSSTASTSSFS) has biased composition (low complexity). Positions 519-536 (RRTVEFRDSSLPRSRRPS) are required for nuclear localization. Over residues 538–548 (GARATAGRTLP) the composition is skewed to low complexity. Over residues 572–581 (LLEEEEEGDQ) the composition is skewed to acidic residues.

Interacts (via proline-rich region) with GRB2 (via SH3 domain 2). Interacts (via N-terminus) with CBX5.

The protein resides in the chromosome. Its subcellular location is the nucleus. It is found in the nucleus lamina. The protein localises to the nucleoplasm. Functionally, functions in tethering peripheral heterochromatin to the nuclear lamina during interphase, possibly through the interaction with heterochromatin protein CBX5/HP1 alpha. Might play a role in reattaching heterochromatin to the nuclear lamina at mitotic exit. Promotes myoblast differentiation during skeletal myogenesis, possibly by stimulating transcription factor MyoD activity via binding to CBX5/HP1 alpha. Involved in the positive regulation of the PI3K-Akt-mTOR signaling pathway and in promoting cell proliferation, possibly via binding to GRB2. This chain is Proline-rich protein 14 (PRR14), found in Bos taurus (Bovine).